The chain runs to 452 residues: tRNA modification GTPase MnmE (452 aa).

Arginine 21, glutamate 82, and arginine 121 together coordinate (6S)-5-formyl-5,6,7,8-tetrahydrofolate. The region spanning 217–373 (GINTTIIGKP…LENKIIEMFN (157 aa)) is the TrmE-type G domain. K(+) is bound at residue asparagine 227. GTP is bound by residues 227–232 (NVGKSS), 246–252 (TDIPGTT), and 271–274 (DTAG). Serine 231 serves as a coordination point for Mg(2+). Positions 246, 248, and 251 each coordinate K(+). Mg(2+) is bound at residue threonine 252. Lysine 452 is a (6S)-5-formyl-5,6,7,8-tetrahydrofolate binding site.

This sequence belongs to the TRAFAC class TrmE-Era-EngA-EngB-Septin-like GTPase superfamily. TrmE GTPase family. As to quaternary structure, homodimer. Heterotetramer of two MnmE and two MnmG subunits. Requires K(+) as cofactor.

The protein resides in the cytoplasm. In terms of biological role, exhibits a very high intrinsic GTPase hydrolysis rate. Involved in the addition of a carboxymethylaminomethyl (cmnm) group at the wobble position (U34) of certain tRNAs, forming tRNA-cmnm(5)s(2)U34. This Finegoldia magna (strain ATCC 29328 / DSM 20472 / WAL 2508) (Peptostreptococcus magnus) protein is tRNA modification GTPase MnmE.